Here is a 199-residue protein sequence, read N- to C-terminus: Recombination protein RecR (199 aa).

Residues 58-73 form a C4-type zinc finger; sequence CSACGNVDTQDPCAIC. A Toprim domain is found at 81 to 176; sequence HILCIVEEVG…SVSRLAHGVP (96 aa).

This sequence belongs to the RecR family.

Its function is as follows. May play a role in DNA repair. It seems to be involved in an RecBC-independent recombinational process of DNA repair. It may act with RecF and RecO. This chain is Recombination protein RecR, found in Parvibaculum lavamentivorans (strain DS-1 / DSM 13023 / NCIMB 13966).